Consider the following 84-residue polypeptide: Large ribosomal subunit protein bL27 (84 aa).

The segment at 1–21 (MAHKKGASSTRNGRDSNAQRL) is disordered. Residues 7–19 (ASSTRNGRDSNAQ) show a composition bias toward polar residues.

It belongs to the bacterial ribosomal protein bL27 family.

This Clavibacter sepedonicus (Clavibacter michiganensis subsp. sepedonicus) protein is Large ribosomal subunit protein bL27.